A 1461-amino-acid polypeptide reads, in one-letter code: Neogenin (1461 aa).

An N-terminal signal peptide occupies residues 1–33 (MAAERGARRLLSTPSFWLYCLLLLGRRAPGAAA). Residues 34-1105 (ARSGSAPQSP…PTSPLDSNML (1072 aa)) are Extracellular-facing. 4 Ig-like C2-type domains span residues 52 to 141 (PFYF…TIIS), 152 to 238 (PRFT…VELK), 243 to 336 (PEVI…AELT), and 341 to 426 (PEFL…AQLI). A glycan (N-linked (GlcNAc...) asparagine) is linked at N73. 3 cysteine pairs are disulfide-bonded: C74–C129, C173–C221, and C270–C320. N210 carries an N-linked (GlcNAc...) asparagine glycan. N326 is a glycosylation site (N-linked (GlcNAc...) asparagine). C362 and C410 are joined by a disulfide. Fibronectin type-III domains follow at residues 441–535 (APRD…TQPE), 541–631 (PAPN…TLSD), 636–731 (APQN…TFES), 741–831 (VPSS…RPHT), 856–952 (PPVG…TFEL), and 957–1054 (PPKD…TPKA). 2 N-linked (GlcNAc...) asparagine glycosylation sites follow: N470 and N489. N-linked (GlcNAc...) asparagine glycans are attached at residues N639 and N715. A glycan (N-linked (GlcNAc...) asparagine) is linked at N909. The disordered stretch occupies residues 1041–1097 (GPMSEAVQFRTPKADSSDKMPNDQASGSGGKGSRLPDLGSDYKPPMSGSNSPHGSPT). Over residues 1052 to 1061 (PKADSSDKMP) the composition is skewed to basic and acidic residues. Residues 1087-1097 (SGSNSPHGSPT) show a composition bias toward polar residues. A helical transmembrane segment spans residues 1106–1126 (LVIIVSVGVITIVVVVIIAVF). Topologically, residues 1127-1461 (CTRRTTSHQK…MKDLNAITTA (335 aa)) are cytoplasmic. Disordered regions lie at residues 1138 to 1160 (KRAACKSVNGSHKYKGNSKDVKP), 1174 to 1206 (PIDKSPDPNPIMTDTPIPRNSQDITPVDNSMDS), 1235 to 1276 (PKMM…PARS), and 1289 to 1381 (TSMS…ALPS). A phosphoserine mark is found at S1178 and S1194. Residues 1191-1206 (PRNSQDITPVDNSMDS) are compositionally biased toward polar residues. T1198 bears the Phosphothreonine mark. Polar residues-rich tracts occupy residues 1289-1322 (TSMSLSDRANSTESVRNTPSTDTMPASSSQTCCT) and 1330-1349 (ATSSSYLASSQEEDSGQSLP). Residues 1366–1375 (AIPPPGPPTY) show a composition bias toward pro residues. Phosphoserine is present on S1401. T1404 carries the phosphothreonine modification. 3 positions are modified to phosphoserine: S1432, S1434, and S1435.

Belongs to the immunoglobulin superfamily. DCC family. In terms of assembly, interacts with MYO10. Interacts with RGMA and RGMB. Interacts with BMP2, BMP4, BMP6, and BMP7. In terms of tissue distribution, widely expressed and also in cancer cell lines.

It is found in the cell membrane. Multi-functional cell surface receptor regulating cell adhesion in many diverse developmental processes, including neural tube and mammary gland formation, myogenesis and angiogenesis. Receptor for members of the BMP, netrin, and repulsive guidance molecule (RGM) families. Netrin-Neogenin interactions result in a chemoattractive axon guidance response and cell-cell adhesion, the interaction between NEO1/Neogenin and RGMa and RGMb induces a chemorepulsive response. The chain is Neogenin (NEO1) from Homo sapiens (Human).